The primary structure comprises 429 residues: Glucose-1-phosphate adenylyltransferase (429 aa).

Alpha-D-glucose 1-phosphate is bound by residues glycine 162, 177–178 (EK), and serine 209.

The protein belongs to the bacterial/plant glucose-1-phosphate adenylyltransferase family. In terms of assembly, homotetramer.

It carries out the reaction alpha-D-glucose 1-phosphate + ATP + H(+) = ADP-alpha-D-glucose + diphosphate. The protein operates within glycan biosynthesis; glycogen biosynthesis. Functionally, involved in the biosynthesis of ADP-glucose, a building block required for the elongation reactions to produce glycogen. Catalyzes the reaction between ATP and alpha-D-glucose 1-phosphate (G1P) to produce pyrophosphate and ADP-Glc. This Trichormus variabilis (strain ATCC 29413 / PCC 7937) (Anabaena variabilis) protein is Glucose-1-phosphate adenylyltransferase.